Consider the following 274-residue polypeptide: Putative phosphatase BUsg_029 (274 aa).

The active-site Nucleophile is aspartate 8. Mg(2+) is bound at residue aspartate 8. Leucine 9 provides a ligand contact to phosphate. Position 10 (aspartate 10) interacts with Mg(2+). Phosphate contacts are provided by residues 42–43 (SG) and lysine 191. Aspartate 214 serves as a coordination point for Mg(2+). Asparagine 217 provides a ligand contact to phosphate.

This sequence belongs to the HAD-like hydrolase superfamily. Cof family. Requires Mg(2+) as cofactor.

This chain is Putative phosphatase BUsg_029, found in Buchnera aphidicola subsp. Schizaphis graminum (strain Sg).